The following is a 337-amino-acid chain: Probable tyrosine--tRNA ligase, cytoplasmic (337 aa).

Tyr35 contacts L-tyrosine. The short motif at 40–48 is the 'HIGH' region element; that stretch reads ITGKPHIAY. Positions 162, 166, 169, and 184 each coordinate L-tyrosine. A 'KMSKS' region motif is present at residues 218 to 222; the sequence is KMSSS.

The protein belongs to the class-I aminoacyl-tRNA synthetase family. As to quaternary structure, homodimer.

Its subcellular location is the cytoplasm. The enzyme catalyses tRNA(Tyr) + L-tyrosine + ATP = L-tyrosyl-tRNA(Tyr) + AMP + diphosphate + H(+). This chain is Probable tyrosine--tRNA ligase, cytoplasmic, found in Encephalitozoon cuniculi (strain GB-M1) (Microsporidian parasite).